A 191-amino-acid polypeptide reads, in one-letter code: 3-isopropylmalate dehydratase small subunit (191 aa).

This sequence belongs to the LeuD family. LeuD type 1 subfamily. In terms of assembly, heterodimer of LeuC and LeuD.

It carries out the reaction (2R,3S)-3-isopropylmalate = (2S)-2-isopropylmalate. It functions in the pathway amino-acid biosynthesis; L-leucine biosynthesis; L-leucine from 3-methyl-2-oxobutanoate: step 2/4. Its function is as follows. Catalyzes the isomerization between 2-isopropylmalate and 3-isopropylmalate, via the formation of 2-isopropylmaleate. The sequence is that of 3-isopropylmalate dehydratase small subunit from Lactococcus lactis subsp. cremoris (strain MG1363).